The chain runs to 257 residues: Probable amino-acid ABC transporter-binding protein HI_1080 (257 aa).

Positions 1-23 are cleaved as a signal peptide; sequence MKKLLFTTALLTGAIAFSTFSHA.

This sequence belongs to the bacterial solute-binding protein 3 family.

The protein localises to the periplasm. Probably part of a binding-protein-dependent transport system for an amino acid. In Haemophilus influenzae (strain ATCC 51907 / DSM 11121 / KW20 / Rd), this protein is Probable amino-acid ABC transporter-binding protein HI_1080.